Reading from the N-terminus, the 200-residue chain is Small ribosomal subunit protein uS4 (200 aa).

Positions 92–155 (SRLDAVVYSL…QKLNVIVESV (64 aa)) constitute an S4 RNA-binding domain.

Belongs to the universal ribosomal protein uS4 family. As to quaternary structure, part of the 30S ribosomal subunit. Contacts protein S5. The interaction surface between S4 and S5 is involved in control of translational fidelity.

One of the primary rRNA binding proteins, it binds directly to 16S rRNA where it nucleates assembly of the body of the 30S subunit. In terms of biological role, with S5 and S12 plays an important role in translational accuracy. This chain is Small ribosomal subunit protein uS4, found in Staphylococcus aureus (strain MRSA252).